Reading from the N-terminus, the 221-residue chain is uncharacterized protein (221 aa).

The next 5 membrane-spanning stretches (helical) occupy residues 2 to 22 (FIAK…FFFV), 34 to 54 (LLTL…LAQA), 97 to 117 (AYGL…SNVI), 131 to 151 (ALDQ…FMGI), and 177 to 197 (ILWP…LQVI).

This sequence belongs to the peroxisomal membrane protein PXMP2/4 family.

It localises to the membrane. This is an uncharacterized protein from Schizosaccharomyces pombe (strain 972 / ATCC 24843) (Fission yeast).